A 510-amino-acid polypeptide reads, in one-letter code: 2,3-bisphosphoglycerate-independent phosphoglycerate mutase (510 aa).

Positions 13 and 63 each coordinate Mn(2+). The active-site Phosphoserine intermediate is S63. Substrate is bound by residues H124, 154–155 (RD), R186, R192, 262–265 (RADR), and K334. Mn(2+)-binding residues include D401, H405, D442, H443, and H461.

The protein belongs to the BPG-independent phosphoglycerate mutase family. Monomer. Requires Mn(2+) as cofactor.

It carries out the reaction (2R)-2-phosphoglycerate = (2R)-3-phosphoglycerate. It functions in the pathway carbohydrate degradation; glycolysis; pyruvate from D-glyceraldehyde 3-phosphate: step 3/5. Catalyzes the interconversion of 2-phosphoglycerate and 3-phosphoglycerate. The protein is 2,3-bisphosphoglycerate-independent phosphoglycerate mutase of Aliivibrio fischeri (strain MJ11) (Vibrio fischeri).